The primary structure comprises 421 residues: Aspartokinase (421 aa).

Position 7–10 (7–10) interacts with ATP; the sequence is KYGG. Residue 25 to 30 participates in substrate binding; the sequence is RIVATK. Serine 41 lines the ATP pocket. Substrate contacts are provided by residues 45 to 49, glutamate 74, 125 to 126, 151 to 154, and serine 154; these read DTTDE, LD, and RGGS. Residues 174–175, 180–185, and lysine 210 each bind ATP; these read SD and YTADPR. ACT domains follow at residues 267–343 and 349–421; these read VTVL…YDDQ and LVGA…GTGR. Substrate is bound by residues aspartate 274, 274 to 279, 292 to 294, glutamine 298, 360 to 361, 374 to 375, and 381 to 382; these read DKPGEA, NID, VT, NI, and SE.

It belongs to the aspartokinase family. As to quaternary structure, tetramer consisting of 2 isoforms Alpha (catalytic and regulation) and of a homodimer of 2 isoforms Beta (regulation). The dimerization of the beta isoforms is stabilized by the bonding of threonine.

It carries out the reaction L-aspartate + ATP = 4-phospho-L-aspartate + ADP. It functions in the pathway amino-acid biosynthesis; L-lysine biosynthesis via DAP pathway; (S)-tetrahydrodipicolinate from L-aspartate: step 1/4. The protein operates within amino-acid biosynthesis; L-methionine biosynthesis via de novo pathway; L-homoserine from L-aspartate: step 1/3. It participates in amino-acid biosynthesis; L-threonine biosynthesis; L-threonine from L-aspartate: step 1/5. Feedback inhibition by lysine and threonine, but he enzyme is moderately inhibited by lysine alone, and threonine alone has no effect. Catalyzes the phosphorylation of the beta-carboxyl group of aspartic acid with ATP to yield 4-phospho-L-aspartate, which is involved in the branched biosynthetic pathway leading to the biosynthesis of amino acids lysine, threonine, isoleucine and methionine. This chain is Aspartokinase (lysC), found in Corynebacterium glutamicum (strain ATCC 13032 / DSM 20300 / JCM 1318 / BCRC 11384 / CCUG 27702 / LMG 3730 / NBRC 12168 / NCIMB 10025 / NRRL B-2784 / 534).